Consider the following 97-residue polypeptide: Small ribosomal subunit protein bS20 (97 aa).

The protein belongs to the bacterial ribosomal protein bS20 family.

In terms of biological role, binds directly to 16S ribosomal RNA. This Prochlorococcus marinus (strain MIT 9312) protein is Small ribosomal subunit protein bS20.